The primary structure comprises 200 residues: Superoxide dismutase [Mn] 1 (200 aa).

The Mn(2+) site is built by His29, His76, Asp158, and His162.

Belongs to the iron/manganese superoxide dismutase family. In terms of assembly, homodimer or homotetramer. Requires Mn(2+) as cofactor.

The enzyme catalyses 2 superoxide + 2 H(+) = H2O2 + O2. Inhibited by hydrogen peroxide. Is resistant to cyanide and azide inhibition. Functionally, destroys superoxide anion radicals which are normally produced within the cells and which are toxic to biological systems. The chain is Superoxide dismutase [Mn] 1 (sod1) from Halobacterium salinarum (strain ATCC 700922 / JCM 11081 / NRC-1) (Halobacterium halobium).